The primary structure comprises 576 residues: 2-succinyl-5-enolpyruvyl-6-hydroxy-3-cyclohexene-1-carboxylate synthase (576 aa).

The protein belongs to the TPP enzyme family. MenD subfamily. In terms of assembly, homodimer. Mg(2+) serves as cofactor. It depends on Mn(2+) as a cofactor. The cofactor is thiamine diphosphate.

It carries out the reaction isochorismate + 2-oxoglutarate + H(+) = 5-enolpyruvoyl-6-hydroxy-2-succinyl-cyclohex-3-ene-1-carboxylate + CO2. It functions in the pathway quinol/quinone metabolism; 1,4-dihydroxy-2-naphthoate biosynthesis; 1,4-dihydroxy-2-naphthoate from chorismate: step 2/7. Its pathway is quinol/quinone metabolism; menaquinone biosynthesis. Functionally, catalyzes the thiamine diphosphate-dependent decarboxylation of 2-oxoglutarate and the subsequent addition of the resulting succinic semialdehyde-thiamine pyrophosphate anion to isochorismate to yield 2-succinyl-5-enolpyruvyl-6-hydroxy-3-cyclohexene-1-carboxylate (SEPHCHC). This Aliivibrio fischeri (strain ATCC 700601 / ES114) (Vibrio fischeri) protein is 2-succinyl-5-enolpyruvyl-6-hydroxy-3-cyclohexene-1-carboxylate synthase.